A 102-amino-acid polypeptide reads, in one-letter code: PqqA binding protein (102 aa).

It belongs to the PqqD family. Monomer. Interacts with PqqE.

It functions in the pathway cofactor biosynthesis; pyrroloquinoline quinone biosynthesis. In terms of biological role, functions as a PqqA binding protein and presents PqqA to PqqE, in the pyrroloquinoline quinone (PQQ) biosynthetic pathway. This is PqqA binding protein from Rhodopseudomonas palustris (strain BisB5).